The sequence spans 446 residues: Signal recognition particle 54 kDa protein (446 aa).

GTP is bound by residues 103-110 (GVQGTGKT), 185-189 (DTAGR), and 245-248 (TKMD).

This sequence belongs to the GTP-binding SRP family. SRP54 subfamily. As to quaternary structure, part of the signal recognition particle protein translocation system, which is composed of SRP and FtsY. Archaeal SRP consists of a 7S RNA molecule of 300 nucleotides and two protein subunits: SRP54 and SRP19.

The protein resides in the cytoplasm. It carries out the reaction GTP + H2O = GDP + phosphate + H(+). Involved in targeting and insertion of nascent membrane proteins into the cytoplasmic membrane. Binds to the hydrophobic signal sequence of the ribosome-nascent chain (RNC) as it emerges from the ribosomes. The SRP-RNC complex is then targeted to the cytoplasmic membrane where it interacts with the SRP receptor FtsY. In Metallosphaera sedula (strain ATCC 51363 / DSM 5348 / JCM 9185 / NBRC 15509 / TH2), this protein is Signal recognition particle 54 kDa protein.